We begin with the raw amino-acid sequence, 288 residues long: Aquaporin NIP2-1 (288 aa).

The residue at position 1 (Met-1) is an N-acetylmethionine. The next 2 membrane-spanning stretches (helical) occupy residues 50–70 (LLAE…AIAV) and 77–97 (VVTL…LVYC). Positions 106–108 (NPA) match the NPA 1 motif. The next 3 membrane-spanning stretches (helical) occupy residues 126–146 (AYIT…RLLF), 170–190 (LQAF…VCAV), and 202–222 (GLII…VSGA). The NPA 2 signature appears at 225–227 (NPA). Residues 234–254 (LVWGCYKGIWIYLLAPTLGAV) form a helical membrane-spanning segment. Residue Ser-278 is modified to Phosphoserine.

This sequence belongs to the MIP/aquaporin (TC 1.A.8) family. NIP (TC 1.A.8.12) subfamily. Specifically expressed in roots with high expression in root elongation zone and root stele.

The protein resides in the endoplasmic reticulum membrane. In terms of biological role, low water transport activity in yeast cells. In Arabidopsis thaliana (Mouse-ear cress), this protein is Aquaporin NIP2-1 (NIP2-1).